The following is a 363-amino-acid chain: NAD(P)H-quinone oxidoreductase subunit 1, chloroplastic (363 aa).

6 helical membrane-spanning segments follow: residues 30 to 50 (LVPILTLVLAITIGVLVIVWL), 104 to 124 (IAVISIILSYSVIPFSYHLVL), 127 to 147 (LGIGVFLWIAVSSIAPIGLLM), 253 to 273 (FGLFYVASYLNLLVSSLFVTV), 300 to 320 (VFGTTMGMFITLAKTYLFLFI), and 343 to 363 (FLLPISLGNLLLTTSFQLLSL).

This sequence belongs to the complex I subunit 1 family. In terms of assembly, NDH is composed of at least 16 different subunits, 5 of which are encoded in the nucleus.

The protein resides in the plastid. It is found in the chloroplast thylakoid membrane. The catalysed reaction is a plastoquinone + NADH + (n+1) H(+)(in) = a plastoquinol + NAD(+) + n H(+)(out). It carries out the reaction a plastoquinone + NADPH + (n+1) H(+)(in) = a plastoquinol + NADP(+) + n H(+)(out). NDH shuttles electrons from NAD(P)H:plastoquinone, via FMN and iron-sulfur (Fe-S) centers, to quinones in the photosynthetic chain and possibly in a chloroplast respiratory chain. The immediate electron acceptor for the enzyme in this species is believed to be plastoquinone. Couples the redox reaction to proton translocation, and thus conserves the redox energy in a proton gradient. In Piper cenocladum (Ant piper), this protein is NAD(P)H-quinone oxidoreductase subunit 1, chloroplastic.